Consider the following 1085-residue polypeptide: Solute carrier family 12 member 4 (1085 aa).

The Cytoplasmic segment spans residues 1–119; that stretch reads MPHFTVVPVD…RRAAEAPSMG (119 aa). A phosphoserine mark is found at Ser-24, Ser-47, Ser-51, Ser-81, and Ser-88. The discontinuously helical transmembrane segment at 120 to 141 threads the bilayer; it reads TLMGVYLPCLQNIFGVILFLRL. K(+) is bound by residues Asn-131 and Ile-132. Residues 142-149 lie on the Extracellular side of the membrane; that stretch reads TWMVGTAG. The helical transmembrane segment at 150-172 threads the bilayer; that stretch reads VLQALLIVLICCCCTLLTAISMS. The Cytoplasmic portion of the chain corresponds to 173-196; that stretch reads AIATNGVVPAGGSYFMISRSLGPE. The chain crosses the membrane as a helical span at residues 197–225; it reads FGGAVGLCFYLGTTFAAAMYILGAIEILL. Residue Tyr-216 coordinates K(+). Topologically, residues 226–248 are extracellular; that stretch reads TYIAPPAAIFYPSGAHDTSNATL. N-linked (GlcNAc...) asparagine glycosylation occurs at Asn-245. 2 helical membrane passes run 249–271 and 272–297; these read NNMR…VGVK and YVNK…GGIK. The Extracellular portion of the chain corresponds to 298 to 419; that stretch reads SIFDPPVFPV…LYVVADIATS (122 aa). Cys-308 and Cys-323 are oxidised to a cystine. 4 N-linked (GlcNAc...) asparagine glycosylation sites follow: Asn-312, Asn-331, Asn-347, and Asn-361. Cysteines 343 and 353 form a disulfide. A helical membrane pass occupies residues 420 to 440; that stretch reads FTVLVGIFFPSVTGIMAGSNR. Positions 429 and 432 each coordinate K(+). 3 residues coordinate chloride: Gly-433, Ile-434, and Met-435. Over 441–450 the chain is Cytoplasmic; it reads SGDLRDAQKS. The helical transmembrane segment at 451–473 threads the bilayer; the sequence is IPVGTILAIITTSLVYFSSVVLF. Residues 474-504 are Extracellular-facing; sequence GACIEGVVLRDKYGDGVSRNLVVGTLAWPSP. A helical membrane pass occupies residues 505–531; sequence WVIVIGSFFSTCGAGLQSLTGAPRLLQ. Residues 532-554 lie on the Cytoplasmic side of the membrane; sequence AIAKDNIIPFLRVFGHGKVNGEP. 2 helical membrane-spanning segments follow: residues 555–575 and 576–598; these read TWAL…ASLD and MVAP…ACAV. Tyr-589 is a chloride binding site. Over 599-612 the chain is Cytoplasmic; it reads QTLLRTPNWRPRFK. Helical transmembrane passes span 613–635 and 636–651; these read YYHW…VSSW and YYAL…IYKY. At 652-1085 the chain is on the cytoplasmic side; the sequence is IEYQGAEKEW…GGREVITIYS (434 aa). Residues 665–681 are scissor helix; the sequence is IRGLSLSAARYALLRLE. ATP is bound by residues Leu-697, Lys-699, Lys-707, Tyr-708, and Val-730. A Phosphoserine modification is found at Ser-734. 3 residues coordinate ATP: Gly-794, Trp-795, and Tyr-797. Residues Ser-916 and Ser-967 each carry the phosphoserine modification. At Thr-983 the chain carries Phosphothreonine. The residue at position 1050 (Ser-1050) is a Phosphoserine.

The protein belongs to the SLC12A transporter family. K/Cl co-transporter subfamily. Homodimer; adopts a domain-swap conformation at the scissor helices connecting the transmembrane domain and C-terminal domain. Heterodimer with other K-Cl cotransporters. Post-translationally, phosphorylated, phosphorylation may regulate transporter activity. As to expression, ubiquitous. Levels are much higher in erythrocytes from patients with Hb SC and Hb SS compared to normal AA erythrocytes. This may contribute to red blood cell dehydration and to the manifestation of sickle cell disease by increasing the intracellular concentration of HbS. In terms of tissue distribution, not detected in circulating reticulocytes.

The protein resides in the cell membrane. It carries out the reaction K(+)(in) + chloride(in) = K(+)(out) + chloride(out). Its activity is regulated as follows. Inhibited by WNK3. Mediates electroneutral potassium-chloride cotransport when activated by cell swelling. May contribute to cell volume homeostasis in single cells. May be involved in the regulation of basolateral Cl(-) exit in NaCl absorbing epithelia. Its function is as follows. No transporter activity. This is Solute carrier family 12 member 4 from Homo sapiens (Human).